Consider the following 173-residue polypeptide: Probable calcium-binding protein CML14 (173 aa).

EF-hand domains follow at residues 21 to 56, 57 to 92, 97 to 132, and 133 to 168; these read SQLK…LGLR, PTGD…VLTT, VDQA…LGQP, and LTFE…SALD. Ca(2+) contacts are provided by Asp34, Asn36, Asp38, Ser40, Glu45, Asp70, Asn72, Asn74, Ser76, Glu81, Asp110, Asp112, Asn114, Glu121, Asp146, Asp148, Asp150, and Glu157.

In terms of biological role, potential calcium sensor. The polypeptide is Probable calcium-binding protein CML14 (CML14) (Oryza sativa subsp. japonica (Rice)).